Consider the following 214-residue polypeptide: ATP-dependent Clp protease proteolytic subunit 3 (214 aa).

S106 serves as the catalytic Nucleophile. H131 is an active-site residue.

This sequence belongs to the peptidase S14 family. Fourteen ClpP subunits assemble into 2 heptameric rings which stack back to back to give a disk-like structure with a central cavity, resembling the structure of eukaryotic proteasomes.

The protein localises to the cytoplasm. It carries out the reaction Hydrolysis of proteins to small peptides in the presence of ATP and magnesium. alpha-casein is the usual test substrate. In the absence of ATP, only oligopeptides shorter than five residues are hydrolyzed (such as succinyl-Leu-Tyr-|-NHMec, and Leu-Tyr-Leu-|-Tyr-Trp, in which cleavage of the -Tyr-|-Leu- and -Tyr-|-Trp bonds also occurs).. Cleaves peptides in various proteins in a process that requires ATP hydrolysis. Has a chymotrypsin-like activity. Plays a major role in the degradation of misfolded proteins. The sequence is that of ATP-dependent Clp protease proteolytic subunit 3 from Trichormus variabilis (strain ATCC 29413 / PCC 7937) (Anabaena variabilis).